Reading from the N-terminus, the 202-residue chain is ATP-dependent Clp protease proteolytic subunit (202 aa).

The Nucleophile role is filled by Ser106. His131 is an active-site residue.

The protein belongs to the peptidase S14 family. Fourteen ClpP subunits assemble into 2 heptameric rings which stack back to back to give a disk-like structure with a central cavity, resembling the structure of eukaryotic proteasomes.

The protein resides in the cytoplasm. It catalyses the reaction Hydrolysis of proteins to small peptides in the presence of ATP and magnesium. alpha-casein is the usual test substrate. In the absence of ATP, only oligopeptides shorter than five residues are hydrolyzed (such as succinyl-Leu-Tyr-|-NHMec, and Leu-Tyr-Leu-|-Tyr-Trp, in which cleavage of the -Tyr-|-Leu- and -Tyr-|-Trp bonds also occurs).. Its function is as follows. Cleaves peptides in various proteins in a process that requires ATP hydrolysis. Has a chymotrypsin-like activity. Plays a major role in the degradation of misfolded proteins. In Shewanella sp. (strain W3-18-1), this protein is ATP-dependent Clp protease proteolytic subunit.